The following is a 296-amino-acid chain: Malonyl-[acyl-carrier protein] O-methyltransferase (296 aa).

This sequence belongs to the methyltransferase superfamily.

The catalysed reaction is malonyl-[ACP] + S-adenosyl-L-methionine = malonyl-[ACP] methyl ester + S-adenosyl-L-homocysteine. It functions in the pathway cofactor biosynthesis; biotin biosynthesis. In terms of biological role, converts the free carboxyl group of a malonyl-thioester to its methyl ester by transfer of a methyl group from S-adenosyl-L-methionine (SAM). It allows to synthesize pimeloyl-ACP via the fatty acid synthetic pathway. The polypeptide is Malonyl-[acyl-carrier protein] O-methyltransferase (Methylovorus sp. (strain MP688)).